The sequence spans 205 residues: Guanylate kinase (205 aa).

One can recognise a Guanylate kinase-like domain in the interval 17-195 (PRLTVLSGPS…VSRELLALML (179 aa)). 24-31 (GPSGVGKS) contributes to the ATP binding site.

The protein belongs to the guanylate kinase family.

The protein resides in the cytoplasm. The enzyme catalyses GMP + ATP = GDP + ADP. In terms of biological role, essential for recycling GMP and indirectly, cGMP. This chain is Guanylate kinase, found in Streptomyces kasugaensis.